Reading from the N-terminus, the 191-residue chain is Apoptosis regulator BHRF1 (191 aa).

Positions Met1–Arg18 are interaction with host VRK2. Residue Asn22 is glycosylated (N-linked (GlcNAc...) asparagine; by host). Positions Glu89–Met109 match the BH1 motif. Positions Glu89–Gly142 are interaction with host VRK2. Asn118 carries N-linked (GlcNAc...) asparagine; by host glycosylation. Residues Gly142–Asn157 carry the BH2 motif. A helical membrane pass occupies residues Trp166–Ile186.

This sequence belongs to the Bcl-2 family. Interacts with isoform 1 of host VRK2; this interaction is involved in protecting cells from apoptosis. Interacts with host PRA1; this interaction seems to modulate BHRF1 anti-apoptotic activity. Interacts with host BCL2L11. Interacts with host BAD and BBC3. Interacts with BALF1; BALF1 acting as a negative regulator of the survival function of BHRF1. Interacts with host BECN1.

Its subcellular location is the host membrane. It localises to the host mitochondrion. Its function is as follows. Prevents premature death of the host cell during virus production, which would otherwise reduce the amount of progeny virus. Acts as a host B-cell leukemia/lymphoma 2 (Bcl-2) homolog, and interacts with pro-apoptotic proteins to prevent mitochondria permeabilization, release of cytochrome c and subsequent apoptosis of the host cell. In addition, plays a role in the inhibiton of host BECN1-mediated starvation-induced autophagy without affecting basal levels of autophagy. The chain is Apoptosis regulator BHRF1 from Homo sapiens (Human).